The chain runs to 112 residues: Large ribosomal subunit protein eL31 (112 aa).

It belongs to the eukaryotic ribosomal protein eL31 family. Component of the large ribosomal subunit. Mature ribosomes consist of a small (40S) and a large (60S) subunit. The 40S subunit contains about 32 different proteins and 1 molecule of RNA (18S). The 60S subunit contains 45 different proteins and 3 molecules of RNA (25S, 5.8S and 5S).

The protein resides in the cytoplasm. Functionally, component of the ribosome, a large ribonucleoprotein complex responsible for the synthesis of proteins in the cell. The small ribosomal subunit (SSU) binds messenger RNAs (mRNAs) and translates the encoded message by selecting cognate aminoacyl-transfer RNA (tRNA) molecules. The large subunit (LSU) contains the ribosomal catalytic site termed the peptidyl transferase center (PTC), which catalyzes the formation of peptide bonds, thereby polymerizing the amino acids delivered by tRNAs into a polypeptide chain. The nascent polypeptides leave the ribosome through a tunnel in the LSU and interact with protein factors that function in enzymatic processing, targeting, and the membrane insertion of nascent chains at the exit of the ribosomal tunnel. The protein is Large ribosomal subunit protein eL31 of Candida albicans (strain SC5314 / ATCC MYA-2876) (Yeast).